A 238-amino-acid polypeptide reads, in one-letter code: Uridylate kinase (238 aa).

Position 12 to 15 (12 to 15 (KLSG)) interacts with ATP. Glycine 54 contacts UMP. Residues glycine 55 and arginine 59 each contribute to the ATP site. UMP-binding positions include aspartate 74 and 135 to 142 (TGNPYFTT). ATP contacts are provided by threonine 162, asparagine 163, tyrosine 168, and aspartate 171.

Belongs to the UMP kinase family. As to quaternary structure, homohexamer.

It is found in the cytoplasm. It carries out the reaction UMP + ATP = UDP + ADP. Its pathway is pyrimidine metabolism; CTP biosynthesis via de novo pathway; UDP from UMP (UMPK route): step 1/1. With respect to regulation, inhibited by UTP. In terms of biological role, catalyzes the reversible phosphorylation of UMP to UDP. The chain is Uridylate kinase from Rhodopseudomonas palustris (strain ATCC BAA-98 / CGA009).